Consider the following 434-residue polypeptide: Gamma-glutamyl phosphate reductase (434 aa).

Belongs to the gamma-glutamyl phosphate reductase family.

It localises to the cytoplasm. The catalysed reaction is L-glutamate 5-semialdehyde + phosphate + NADP(+) = L-glutamyl 5-phosphate + NADPH + H(+). The protein operates within amino-acid biosynthesis; L-proline biosynthesis; L-glutamate 5-semialdehyde from L-glutamate: step 2/2. Catalyzes the NADPH-dependent reduction of L-glutamate 5-phosphate into L-glutamate 5-semialdehyde and phosphate. The product spontaneously undergoes cyclization to form 1-pyrroline-5-carboxylate. This chain is Gamma-glutamyl phosphate reductase, found in Trichormus variabilis (strain ATCC 29413 / PCC 7937) (Anabaena variabilis).